A 455-amino-acid chain; its full sequence is UDP-N-acetylmuramoylalanine--D-glutamate ligase (455 aa).

117-123 (GTNGKTT) contacts ATP.

The protein belongs to the MurCDEF family.

The protein localises to the cytoplasm. It catalyses the reaction UDP-N-acetyl-alpha-D-muramoyl-L-alanine + D-glutamate + ATP = UDP-N-acetyl-alpha-D-muramoyl-L-alanyl-D-glutamate + ADP + phosphate + H(+). Its pathway is cell wall biogenesis; peptidoglycan biosynthesis. Its function is as follows. Cell wall formation. Catalyzes the addition of glutamate to the nucleotide precursor UDP-N-acetylmuramoyl-L-alanine (UMA). This is UDP-N-acetylmuramoylalanine--D-glutamate ligase from Pelotomaculum thermopropionicum (strain DSM 13744 / JCM 10971 / SI).